A 282-amino-acid chain; its full sequence is Transcription repressor MYB4 (282 aa).

HTH myb-type domains follow at residues 9-61 and 62-116; these read KAHT…INYL and RPDL…RRKL. 2 consecutive DNA-binding regions (H-T-H motif) follow at residues 37–61 and 89–112; these read WRSL…INYL and WSLI…NTHI. A disordered region spans residues 119 to 145; it reads RGIDPTSHRPIQESSASQDSKPTQLEP. The segment covering 130-145 has biased composition (polar residues); sequence QESSASQDSKPTQLEP.

Interacts with BHLH12/MYC1 and BHLH42/TT8. Interacts with SAD2. As to expression, widely expressed at low level. Highly expressed in siliques. Weakly expressed in seedlings, young and mature leaves, cauline leaves, stems, flower buds and roots.

Its subcellular location is the nucleus. In terms of biological role, transcription repressor involved in regulation of protection against UV. Mediates transcriptional repression of CYP73A5, the gene encoding trans-cinnamate 4-monooxygenase, thereby regulating the accumulation of the UV-protectant compound sinapoylmalate. The polypeptide is Transcription repressor MYB4 (MYB4) (Arabidopsis thaliana (Mouse-ear cress)).